A 727-amino-acid chain; its full sequence is Elongation factor 2 (727 aa).

The region spanning 19–260 (EQIRNMGICA…MSIKHLPNPL (242 aa)) is the tr-type G domain. GTP-binding positions include 28 to 35 (AHIDHGKT), 94 to 98 (DTPGH), and 148 to 151 (NKVD). Residue H603 is modified to Diphthamide.

It belongs to the TRAFAC class translation factor GTPase superfamily. Classic translation factor GTPase family. EF-G/EF-2 subfamily.

Its subcellular location is the cytoplasm. Catalyzes the GTP-dependent ribosomal translocation step during translation elongation. During this step, the ribosome changes from the pre-translocational (PRE) to the post-translocational (POST) state as the newly formed A-site-bound peptidyl-tRNA and P-site-bound deacylated tRNA move to the P and E sites, respectively. Catalyzes the coordinated movement of the two tRNA molecules, the mRNA and conformational changes in the ribosome. The polypeptide is Elongation factor 2 (Methanococcus maripaludis (strain DSM 14266 / JCM 13030 / NBRC 101832 / S2 / LL)).